Reading from the N-terminus, the 335-residue chain is GTPase Obg (335 aa).

One can recognise an Obg domain in the interval 1–159; it reads MKFVDSASIR…REIGLELSIM (159 aa). One can recognise an OBG-type G domain in the interval 160–332; sequence ADIGLLGMPN…LVAGLFKLVK (173 aa). Residues 166 to 173, 191 to 195, 212 to 215, 282 to 285, and 313 to 315 contribute to the GTP site; these read GMPNAGKS, FTTLH, DIPG, NKMD, and SAL. Mg(2+) contacts are provided by Ser173 and Thr193.

This sequence belongs to the TRAFAC class OBG-HflX-like GTPase superfamily. OBG GTPase family. In terms of assembly, monomer. It depends on Mg(2+) as a cofactor.

Its subcellular location is the cytoplasm. In terms of biological role, an essential GTPase which binds GTP, GDP and possibly (p)ppGpp with moderate affinity, with high nucleotide exchange rates and a fairly low GTP hydrolysis rate. Plays a role in control of the cell cycle, stress response, ribosome biogenesis and in those bacteria that undergo differentiation, in morphogenesis control. This chain is GTPase Obg, found in Ruthia magnifica subsp. Calyptogena magnifica.